The following is a 558-amino-acid chain: Mitochondrial nucleoid-associated protein 1 (558 aa).

At 1-527 (MGAAEPRMEV…VQCNTTIKKS (527 aa)) the chain is on the extracellular side. Disordered stretches follow at residues 29–88 (KMRG…SWTA), 130–205 (LQRV…KLGT), and 222–269 (LSDR…KTQK). Residues 36 to 45 (SADQNVSQSK) show a composition bias toward polar residues. A compositionally biased stretch (basic and acidic residues) spans 51–81 (QKEKSPTRDLTRAKEKELEVDRPKRAVKAET). Composition is skewed to polar residues over residues 131 to 144 (QRVT…SDAT) and 187 to 197 (SSTQPHANPAT). Residues 528–548 (GVGGLTMLFAGYFILCCNWSF) traverse the membrane as a helical segment. The Cytoplasmic portion of the chain corresponds to 549-558 (KHLKLQHWRK).

It localises to the mitochondrion inner membrane. The protein resides in the mitochondrion matrix. Its subcellular location is the mitochondrion nucleoid. In terms of biological role, critical regulator of mitochondrial DNA (mtDNA) abundance. Binds dsDNA throughout the mitochondrial genome without sequence specificity and controls mtDNA copy number by promoting its replication. Also plays important roles in mitochondrial metabolism and cell proliferation. The chain is Mitochondrial nucleoid-associated protein 1 from Mus musculus (Mouse).